The following is a 154-amino-acid chain: Low molecular weight protein-tyrosine-phosphatase PtpA (154 aa).

Catalysis depends on C8, which acts as the Nucleophile. R14 is an active-site residue. D120 functions as the Proton donor in the catalytic mechanism.

It belongs to the low molecular weight phosphotyrosine protein phosphatase family.

It catalyses the reaction O-phospho-L-tyrosyl-[protein] + H2O = L-tyrosyl-[protein] + phosphate. Its function is as follows. Dephosphorylates the phosphotyrosine-containing proteins. The chain is Low molecular weight protein-tyrosine-phosphatase PtpA (ptpA) from Staphylococcus epidermidis (strain ATCC 35984 / DSM 28319 / BCRC 17069 / CCUG 31568 / BM 3577 / RP62A).